Here is a 420-residue protein sequence, read N- to C-terminus: Glucose-1-phosphate adenylyltransferase (420 aa).

Residues Y107, G172, 187 to 188, and S205 contribute to the alpha-D-glucose 1-phosphate site; that span reads EK.

It belongs to the bacterial/plant glucose-1-phosphate adenylyltransferase family. As to quaternary structure, homotetramer.

It catalyses the reaction alpha-D-glucose 1-phosphate + ATP + H(+) = ADP-alpha-D-glucose + diphosphate. It participates in glycan biosynthesis; glycogen biosynthesis. Involved in the biosynthesis of ADP-glucose, a building block required for the elongation reactions to produce glycogen. Catalyzes the reaction between ATP and alpha-D-glucose 1-phosphate (G1P) to produce pyrophosphate and ADP-Glc. This is Glucose-1-phosphate adenylyltransferase from Rhizobium etli (strain CIAT 652).